A 285-amino-acid polypeptide reads, in one-letter code: Chalcone synthase 6-4 (285 aa).

Residue C60 is part of the active site.

Belongs to the thiolase-like superfamily. Chalcone/stilbene synthases family.

It catalyses the reaction (E)-4-coumaroyl-CoA + 3 malonyl-CoA + 3 H(+) = 2',4,4',6'-tetrahydroxychalcone + 3 CO2 + 4 CoA. It participates in secondary metabolite biosynthesis; flavonoid biosynthesis. Functionally, the primary product of this enzyme is 4,2',4',6'-tetrahydroxychalcone (also termed naringenin-chalcone or chalcone) which can under specific conditions spontaneously isomerize into naringenin. The protein is Chalcone synthase 6-4 (CHS6-4) of Medicago sativa (Alfalfa).